Reading from the N-terminus, the 505-residue chain is Deoxyguanosinetriphosphate triphosphohydrolase (505 aa).

The HD domain maps to 66–273 (RLTHSMEVQQ…MEAADDISYC (208 aa)).

The protein belongs to the dGTPase family. Type 1 subfamily. In terms of assembly, homotetramer. Mg(2+) serves as cofactor.

The enzyme catalyses dGTP + H2O = 2'-deoxyguanosine + triphosphate + H(+). In terms of biological role, dGTPase preferentially hydrolyzes dGTP over the other canonical NTPs. The polypeptide is Deoxyguanosinetriphosphate triphosphohydrolase (Salmonella schwarzengrund (strain CVM19633)).